The chain runs to 239 residues: Orotidine 5'-phosphate decarboxylase (239 aa).

Substrate-binding positions include Asp-15, Lys-37, 64–73 (DLKYHDIPNT), Thr-126, Arg-187, Gln-196, Gly-216, and Arg-217. Lys-66 functions as the Proton donor in the catalytic mechanism.

Belongs to the OMP decarboxylase family. Type 1 subfamily. In terms of assembly, homodimer.

It carries out the reaction orotidine 5'-phosphate + H(+) = UMP + CO2. It participates in pyrimidine metabolism; UMP biosynthesis via de novo pathway; UMP from orotate: step 2/2. Catalyzes the decarboxylation of orotidine 5'-monophosphate (OMP) to uridine 5'-monophosphate (UMP). The sequence is that of Orotidine 5'-phosphate decarboxylase from Geotalea daltonii (strain DSM 22248 / JCM 15807 / FRC-32) (Geobacter daltonii).